The following is a 333-amino-acid chain: Olfactory receptor 9S13 (333 aa).

At 1–35 (MATAVHRNGSLTPVSLRVFVLVGFGGGALTQALLF) the chain is on the extracellular side. Asn-8 carries an N-linked (GlcNAc...) asparagine glycan. Residues 36–56 (AVFLVLYVVTVLGNLTMIVVI) form a helical membrane-spanning segment. At 57-72 (TLDARLHSPMYFFLKN) the chain is on the cytoplasmic side. The helical transmembrane segment at 73–93 (LSFVDLCYSSAIAPNALANFL) threads the bilayer. At 94 to 106 (STSKVISFEACAT) the chain is on the extracellular side. Cys-104 and Cys-196 form a disulfide bridge. The chain crosses the membrane as a helical span at residues 107-127 (QFFFFSLLATTETFLLAVMAY). Residues 128–150 (DRFMAICSPLRYPVTMCPTTCTR) lie on the Cytoplasmic side of the membrane. The chain crosses the membrane as a helical span at residues 151 to 171 (LVLGTFCVGCLNSIVQTSLTF). The Extracellular segment spans residues 172–203 (QLPFCSSNRIDHFYCDVPPLLQLACASTALNE). A helical transmembrane segment spans residues 204 to 224 (LFLFGLCGFIIVSTTLAVLVS). The Cytoplasmic segment spans residues 225 to 251 (YGYITVTILRMHSGSGRHKVFSTCGSH). Residues 252–272 (LTAVSLFYGTLFVMYAQPGAL) form a helical membrane-spanning segment. The Extracellular segment spans residues 273-278 (TSMEQG). Residues 279-299 (KVVSIFYTLVIPMLNPLIYSL) traverse the membrane as a helical segment. The Cytoplasmic portion of the chain corresponds to 300 to 333 (RNKDVKDALQRLGQRHSLVKAVRGCPAAGGNASV).

The protein belongs to the G-protein coupled receptor 1 family.

It localises to the cell membrane. Odorant receptor. This chain is Olfactory receptor 9S13, found in Mus musculus (Mouse).